A 130-amino-acid polypeptide reads, in one-letter code: MSLNVRVITPDRIVWDANAEELILPSSTGQLGILTDHAPLLTALDIGVMRLKTGGNWISFVLMEGFAEVEDNKITILCNGAEEGASIDASTAQAALEKVTLLVDEAATKKEKIEATIELRKAKARLQAVA.

The protein belongs to the ATPase epsilon chain family. In terms of assembly, F-type ATPases have 2 components, CF(1) - the catalytic core - and CF(0) - the membrane proton channel. CF(1) has five subunits: alpha(3), beta(3), gamma(1), delta(1), epsilon(1). CF(0) has three main subunits: a, b and c.

It is found in the plastid. The protein localises to the chloroplast thylakoid membrane. Produces ATP from ADP in the presence of a proton gradient across the membrane. In Emiliania huxleyi (Coccolithophore), this protein is ATP synthase epsilon chain, chloroplastic.